The following is a 1006-amino-acid chain: Beta-galactosidase (1006 aa).

The N-terminal stretch at 1–19 (MKLSSACAIALLAAQAAGA) is a signal peptide. Asn156 carries N-linked (GlcNAc...) asparagine glycosylation. Residue Glu200 is the Proton donor of the active site. Glu298 acts as the Nucleophile in catalysis. N-linked (GlcNAc...) asparagine glycosylation is found at Asn373, Asn402, Asn422, Asn478, Asn522, Asn622, Asn739, Asn760, Asn777, and Asn805.

The protein belongs to the glycosyl hydrolase 35 family.

The enzyme catalyses Hydrolysis of terminal non-reducing beta-D-galactose residues in beta-D-galactosides.. Cleaves beta-linked terminal galactosyl residues from gangliosides, glycoproteins, and glycosaminoglycans. This Aspergillus niger protein is Beta-galactosidase (lacA).